The sequence spans 104 residues: Cell division protein FtsB (104 aa).

The Cytoplasmic portion of the chain corresponds to Met-1–Lys-3. The chain crosses the membrane as a helical span at residues Leu-4 to Leu-21. The Periplasmic segment spans residues Gly-22–Gln-104. Positions Asp-33–Gly-62 form a coiled coil.

The protein belongs to the FtsB family. As to quaternary structure, part of a complex composed of FtsB, FtsL and FtsQ.

Its subcellular location is the cell inner membrane. Essential cell division protein. May link together the upstream cell division proteins, which are predominantly cytoplasmic, with the downstream cell division proteins, which are predominantly periplasmic. This Erwinia tasmaniensis (strain DSM 17950 / CFBP 7177 / CIP 109463 / NCPPB 4357 / Et1/99) protein is Cell division protein FtsB.